Reading from the N-terminus, the 448-residue chain is Homogentisate 1,2-dioxygenase (448 aa).

H303 acts as the Proton acceptor in catalysis. Positions 346 and 352 each coordinate Fe cation. Homogentisate-binding residues include Y361 and H382. H382 is a binding site for Fe cation.

The protein belongs to the homogentisate dioxygenase family. In terms of assembly, hexamer; dimer of trimers. The cofactor is Fe cation.

It catalyses the reaction homogentisate + O2 = 4-maleylacetoacetate + H(+). The protein operates within amino-acid degradation; L-phenylalanine degradation; acetoacetate and fumarate from L-phenylalanine: step 4/6. Its function is as follows. Involved in the catabolism of homogentisate (2,5-dihydroxyphenylacetate or 2,5-OH-PhAc), a central intermediate in the degradation of phenylalanine and tyrosine. Catalyzes the oxidative ring cleavage of the aromatic ring of homogentisate to yield maleylacetoacetate. In Rhodopseudomonas palustris (strain BisA53), this protein is Homogentisate 1,2-dioxygenase.